Here is a 688-residue protein sequence, read N- to C-terminus: UvrABC system protein C (688 aa).

Positions 1 to 14 are enriched in basic and acidic residues; the sequence is MSPLDQKNKPRGGA. The segment at 1 to 20 is disordered; it reads MSPLDQKNKPRGGADDLPPE. Positions 71–149 constitute a GIY-YIG domain; sequence NAPGVYRMMN…IKRLRPRFNV (79 aa). The region spanning 259–294 is the UVR domain; the sequence is QKVKTEISAAMQQASEDLDFERAAIYRDRLAALSHV.

The protein belongs to the UvrC family. As to quaternary structure, interacts with UvrB in an incision complex.

It localises to the cytoplasm. The UvrABC repair system catalyzes the recognition and processing of DNA lesions. UvrC both incises the 5' and 3' sides of the lesion. The N-terminal half is responsible for the 3' incision and the C-terminal half is responsible for the 5' incision. The sequence is that of UvrABC system protein C from Mesorhizobium japonicum (strain LMG 29417 / CECT 9101 / MAFF 303099) (Mesorhizobium loti (strain MAFF 303099)).